A 568-amino-acid polypeptide reads, in one-letter code: Sentrin-specific protease 3 (568 aa).

The disordered stretch occupies residues 1-119; that stretch reads MKETIQGTGS…PSHRKTCSQR (119 aa). Residues Ser52, Ser71, and Ser73 each carry the phosphoserine modification. Acidic residues predominate over residues 72 to 87; the sequence is ASEEEEEEEEEDEEEV. Over residues 106-119 the composition is skewed to basic residues; it reads RALRPSHRKTCSQR. 2 consecutive short sequence motifs (nuclear localization signal) follow at residues 119-122 and 147-153; these read RRRR and RHRGRRR. The interval 155 to 174 is disordered; sequence LAHPKNHLSPQEGGATPQVP. Residue Ser163 is modified to Phosphoserine. At Thr170 the chain carries Phosphothreonine. 4 positions are modified to phosphoserine: Ser175, Ser182, Ser206, and Ser226. Residues 380–537 form a protease region; that stretch reads HVLTMDDLGT…AFVLQYCKHL (158 aa). Active-site residues include His459 and Asp476. Cys526 serves as the catalytic Nucleophile.

The protein belongs to the peptidase C48 family. Component of some MLL1/MLL complex, at least composed of the core components KMT2A/MLL1, ASH2L, HCFC1/HCF1, WDR5 and RBBP5, as well as the facultative components BACC1, CHD8, E2F6, HSP70, INO80C, KANSL1, LAS1L, MAX, MCRS1, MGA, MYST1/MOF, PELP1, PHF20, PRP31, RING2, RUVB1/TIP49A, RUVB2/TIP49B, SENP3, TAF1, TAF4, TAF6, TAF7, TAF9 and TEX10. Interacts with EP300, NPM1 and CDCA8. Component of the 5FMC complex, at least composed of PELP1, LAS1L, TEX10, WDR18 and SENP3; the complex interacts with methylated CHTOP and ZNF148. Interacts with NOL9. Interacts with CCAR2.

The protein localises to the nucleus. Its subcellular location is the nucleolus. The protein resides in the nucleoplasm. It is found in the cytoplasm. Its activity is regulated as follows. On oxidative stress, SENP3 degradation is blocked by inhibition of its ubiquitination, which stabilizes it as it accumulates in the nucleoplasm. Functionally, protease that releases SUMO2 and SUMO3 monomers from sumoylated substrates, but has only weak activity against SUMO1 conjugates. Deconjugates SUMO2 from MEF2D, which increases its transcriptional activation capability. Deconjugates SUMO2 and SUMO3 from CDCA8. Redox sensor that, when redistributed into nucleoplasm, can act as an effector to enhance HIF1A transcriptional activity by desumoylating EP300. Required for rRNA processing through deconjugation of SUMO2 and SUMO3 from nucleophosmin, NPM1. Plays a role in the regulation of sumoylation status of ZNF148. Functions as a component of the Five Friends of Methylated CHTOP (5FMC) complex; the 5FMC complex is recruited to ZNF148 by methylated CHTOP, leading to desumoylation of ZNF148 and subsequent transactivation of ZNF148 target genes. Deconjugates SUMO2 from KAT5. Catalyzes desumoylation of MRE11. The polypeptide is Sentrin-specific protease 3 (Senp3) (Mus musculus (Mouse)).